Here is a 1368-residue protein sequence, read N- to C-terminus: DNA-directed RNA polymerase subunit beta (1368 aa).

The protein belongs to the RNA polymerase beta chain family. In terms of assembly, the RNAP catalytic core consists of 2 alpha, 1 beta, 1 beta' and 1 omega subunit. When a sigma factor is associated with the core the holoenzyme is formed, which can initiate transcription.

It carries out the reaction RNA(n) + a ribonucleoside 5'-triphosphate = RNA(n+1) + diphosphate. Its function is as follows. DNA-dependent RNA polymerase catalyzes the transcription of DNA into RNA using the four ribonucleoside triphosphates as substrates. This Burkholderia lata (strain ATCC 17760 / DSM 23089 / LMG 22485 / NCIMB 9086 / R18194 / 383) protein is DNA-directed RNA polymerase subunit beta.